Here is a 1212-residue protein sequence, read N- to C-terminus: Solute carrier family 12 member 2 (1212 aa).

Residue Met-1 is modified to N-acetylmethionine. Topologically, residues 1 to 286 are cytoplasmic; that stretch reads MEPRPTAPSS…AESKGVVKFG (286 aa). Disordered regions lie at residues 36–81, 112–138, and 150–193; these read GTAV…QSRF, GAKQ…AKGR, and SSAE…GGGS. Phosphoserine is present on residues Ser-77 and Ser-79. Positions 80-83 match the RFXV motif 1 motif; the sequence is RFQV. Residues 127–137 are compositionally biased toward basic and acidic residues; that stretch reads EPAKGSEEAKG. The RFXV motif 2 signature appears at 138–141; the sequence is RFRV. The span at 150-160 shows a compositional bias: low complexity; sequence SSAEDSLSDAA. Residues Thr-203, Thr-207, and Thr-212 each carry the phosphothreonine; by OXSR1 and STK39 modification. 2 positions are modified to phosphothreonine: Thr-217 and Thr-230. At Ser-242 the chain carries Phosphoserine. Thr-266 is modified (phosphothreonine). A discontinuously helical membrane pass occupies residues 287–316; sequence WIKGVLVRCMLNIWGVMLFIRLSWIVGQAG. Leu-297 lines the Na(+) pocket. K(+) contacts are provided by Asn-298 and Ile-299. Trp-300 contributes to the Na(+) binding site. Residues Gly-301, Val-302, and Met-303 each contribute to the chloride site. A helical transmembrane segment spans residues 317 to 336; sequence IGLSVLVIMMATVVTTITGL. The Cytoplasmic portion of the chain corresponds to 337 to 367; that stretch reads STSAIATNGFVRGGGAYYLISRSLGPEFGGA. The chain crosses the membrane as a helical span at residues 368 to 395; the sequence is IGLIFAFANAVAVAMYVVGFAETVVELL. Phe-372 contacts chloride. Tyr-383 contributes to the K(+) binding site. Topologically, residues 396-405 are extracellular; sequence KEHSILMIDE. A helical membrane pass occupies residues 406–429; the sequence is INDIRIIGAITVVILLGISVAGME. Residues 430-432 are Cytoplasmic-facing; that stretch reads WEA. A helical membrane pass occupies residues 433–454; that stretch reads KAQIVLLVILLLAIGDFVIGTF. Residues 455-486 are Extracellular-facing; the sequence is IPLESKKPKGFFGYKSEIFNENFGPDFREEET. Residues 487-504 form a discontinuously helical membrane-spanning segment; it reads FFSVFAIFFPAATGILAG. K(+) is bound by residues Pro-496, Ala-497, and Thr-499. 2 residues coordinate chloride: Pro-496 and Ala-497. Positions 500 and 501 each coordinate chloride. Over 505 to 519 the chain is Cytoplasmic; that stretch reads ANISGDLADPQSAIP. Residues 520-541 traverse the membrane as a helical segment; that stretch reads KGTLLAILITTLVYVGIAVSVG. At 542 to 598 the chain is on the extracellular side; the sequence is SCVVRDATGNVNDTIVTELTNCTSAACKLNFDFSSCESSPCSYGLMNNFQVMSMVSG. Asn-553 and Asn-562 each carry an N-linked (GlcNAc...) asparagine glycan. 2 disulfide bridges follow: Cys-563/Cys-568 and Cys-577/Cys-582. Residues 599-623 form a helical membrane-spanning segment; sequence FTPLISAGIFSATLSSALASLVSAP. Residues Ala-610, Ser-613, and Ser-614 each coordinate Na(+). Residues 624-651 lie on the Cytoplasmic side of the membrane; it reads KIFQALCKDNIYPAFQMFAKGYGKNNEP. A run of 2 helical transmembrane segments spans residues 652–672 and 673–691; these read LRGY…AELN and VIAP…LINF. Residues Phe-682 and Tyr-686 each contribute to the chloride site. Residues 692 to 714 lie on the Cytoplasmic side of the membrane; sequence SVFHASLAKSPGWRPAFKYYNMW. 2 consecutive transmembrane segments (helical) span residues 715–732 and 733–745; these read ISLL…VINW and WAAL…VLGL. The Cytoplasmic portion of the chain corresponds to 746-1212; the sequence is YIYVTYKKPD…NHQSVLTFYS (467 aa). Residues 761-778 are scissor helix; it reads STQALTYLNALQHSIRLS. Ser-940 and Ser-944 each carry phosphoserine. Residues 962–978 are compositionally biased toward basic and acidic residues; the sequence is LDTSKPLSEKPITHKVE. Positions 962–989 are disordered; that stretch reads LDTSKPLSEKPITHKVEEEDGKTATQPL. Phosphoserine is present on Ser-994.

This sequence belongs to the SLC12A transporter family. In terms of assembly, homodimer; adopts a domain-swap conformation at the scissor helices connecting the transmembrane domain and C-terminal domain. Phosphorylated at Thr-203, Thr-207 and Thr-212 by OXSR1/OSR1 and STK39/SPAK downstream of WNK kinases (WNK1, WNK2, WNK3 or WNK4), promoting its activity. As to expression, expressed in many tissues.

Its subcellular location is the basolateral cell membrane. It carries out the reaction K(+)(out) + 2 chloride(out) + Na(+)(out) = K(+)(in) + 2 chloride(in) + Na(+)(in). Its activity is regulated as follows. Activated following phosphorylation by OXSR1/OSR1 and STK39/SPAK downstream of WNK kinases (WNK1, WNK2, WNK3 or WNK4). Inhibited by bumetanide. Inhibited by furosemide. Cation-chloride cotransporter which mediates the electroneutral transport of chloride, potassium and/or sodium ions across the membrane. Plays a vital role in the regulation of ionic balance and cell volume. The protein is Solute carrier family 12 member 2 (SLC12A2) of Homo sapiens (Human).